A 680-amino-acid chain; its full sequence is Tripartite terminase subunit 1 (680 aa).

A C3H1-type zinc finger spans residues 180–208 (CLECVLETSVVPNQGETLNELLLNHNCHH). 610-617 (YNITWEKN) is a binding site for ATP.

This sequence belongs to the herpesviridae TRM1 protein family. As to quaternary structure, associates with TRM2 and TRM3 to form the tripartite terminase complex. Interacts with portal protein.

Its subcellular location is the host nucleus. In terms of biological role, component of the molecular motor that translocates viral genomic DNA in empty capsid during DNA packaging. Forms a tripartite terminase complex together with TRM2 and TRM3 in the host cytoplasm. Once the complex reaches the host nucleus, it interacts with the capsid portal vertex. This portal forms a ring in which genomic DNA is translocated into the capsid. TRM1 carries an endonuclease activity that plays an important role for the cleavage of concatemeric viral DNA into unit length genomes. This is Tripartite terminase subunit 1 from Alcelaphine herpesvirus 1 (strain C500) (AlHV-1).